Reading from the N-terminus, the 89-residue chain is Chromosomal protein MC1a (89 aa).

Protects DNA against thermal denaturation and modulates transcription. The protein is Chromosomal protein MC1a of Methanothrix soehngenii (Methanosaeta concilii).